A 323-amino-acid chain; its full sequence is tRNA dimethylallyltransferase (323 aa).

12-19 (GPTAAGKT) lines the ATP pocket. 14–19 (TAAGKT) is a substrate binding site. Interaction with substrate tRNA regions lie at residues 37–40 (DSAL) and 161–165 (QRLIR).

The protein belongs to the IPP transferase family. In terms of assembly, monomer. Mg(2+) serves as cofactor.

The catalysed reaction is adenosine(37) in tRNA + dimethylallyl diphosphate = N(6)-dimethylallyladenosine(37) in tRNA + diphosphate. Functionally, catalyzes the transfer of a dimethylallyl group onto the adenine at position 37 in tRNAs that read codons beginning with uridine, leading to the formation of N6-(dimethylallyl)adenosine (i(6)A). The chain is tRNA dimethylallyltransferase from Pseudomonas putida (strain GB-1).